We begin with the raw amino-acid sequence, 261 residues long: Ribosomal RNA small subunit methyltransferase J (261 aa).

S-adenosyl-L-methionine is bound by residues 101-102 (RD), 117-118 (ER), 153-154 (SS), and aspartate 176.

It belongs to the methyltransferase superfamily. RsmJ family.

It is found in the cytoplasm. It carries out the reaction guanosine(1516) in 16S rRNA + S-adenosyl-L-methionine = N(2)-methylguanosine(1516) in 16S rRNA + S-adenosyl-L-homocysteine + H(+). In terms of biological role, specifically methylates the guanosine in position 1516 of 16S rRNA. The polypeptide is Ribosomal RNA small subunit methyltransferase J (Vibrio cholerae serotype O1 (strain ATCC 39315 / El Tor Inaba N16961)).